Reading from the N-terminus, the 459-residue chain is DNA damage-inducible protein F (459 aa).

12 helical membrane passes run 2–22 (PPGV…MAFL), 29–49 (LWHL…LGLV), 63–83 (LGGV…LLFL), 111–131 (LLLA…IIDL), 154–174 (WLSA…LGVQ), 180–200 (VILL…LVMG), 207–227 (GAAL…LLMV), 265–285 (LLQL…SDII), 289–309 (AVLM…AYAV), 338–358 (IVAL…IALL), 373–393 (IWQV…GMFI), and 416–436 (LLTL…VFLA).

Belongs to the multi antimicrobial extrusion (MATE) (TC 2.A.66.1) family.

The protein resides in the cell inner membrane. This chain is DNA damage-inducible protein F (dinF), found in Escherichia coli (strain K12).